Here is a 385-residue protein sequence, read N- to C-terminus: DNA replication and repair protein RecF (385 aa).

30 to 37 contributes to the ATP binding site; that stretch reads GSNGFGKT.

It belongs to the RecF family.

The protein resides in the cytoplasm. Its function is as follows. The RecF protein is involved in DNA metabolism; it is required for DNA replication and normal SOS inducibility. RecF binds preferentially to single-stranded, linear DNA. It also seems to bind ATP. In Mycobacterium avium (strain 104), this protein is DNA replication and repair protein RecF.